A 414-amino-acid chain; its full sequence is Serine hydroxymethyltransferase (414 aa).

(6S)-5,6,7,8-tetrahydrofolate contacts are provided by residues Leu117 and 121 to 123 (GHL). Lys226 carries the N6-(pyridoxal phosphate)lysine modification.

The protein belongs to the SHMT family. In terms of assembly, homodimer. It depends on pyridoxal 5'-phosphate as a cofactor.

The protein resides in the cytoplasm. It carries out the reaction (6R)-5,10-methylene-5,6,7,8-tetrahydrofolate + glycine + H2O = (6S)-5,6,7,8-tetrahydrofolate + L-serine. It functions in the pathway one-carbon metabolism; tetrahydrofolate interconversion. It participates in amino-acid biosynthesis; glycine biosynthesis; glycine from L-serine: step 1/1. Catalyzes the reversible interconversion of serine and glycine with tetrahydrofolate (THF) serving as the one-carbon carrier. This reaction serves as the major source of one-carbon groups required for the biosynthesis of purines, thymidylate, methionine, and other important biomolecules. Also exhibits THF-independent aldolase activity toward beta-hydroxyamino acids, producing glycine and aldehydes, via a retro-aldol mechanism. The chain is Serine hydroxymethyltransferase from Dictyoglomus thermophilum (strain ATCC 35947 / DSM 3960 / H-6-12).